The primary structure comprises 353 residues: MPQKVRIALDAMGGDFGPSVVIPGAAISLGRHPDVEFLLYGDAKLIEKELAAHPALRKASRVVHTDVAVAMHDKPSVALRRGRYKSSMWQAIDAVKKTEADVTVSAGNTGALMAMARFCLRTLPGIDRPAIAATWPTMRGDSVVLDLGASIGGDAQHLKALAIMGAAMASVLFDLERPTVGLLNIGVEEIKGGEEIREAAELLRAMNSQRFDFIGFVEGDGIGKGAADVIVSEGFAGNIALKAAEGTARQLAEYLRAAMSRTWRSKIGYLFARDAFKALKDKMDPNKSNGGVFLGLNGIVVKSHGGTNAEGFAYAVDVGYDMVRYDLLTKINQTLNRDAGALVATPSAQEVVS.

This sequence belongs to the PlsX family. Homodimer. Probably interacts with PlsY.

It is found in the cytoplasm. It catalyses the reaction a fatty acyl-[ACP] + phosphate = an acyl phosphate + holo-[ACP]. The protein operates within lipid metabolism; phospholipid metabolism. Catalyzes the reversible formation of acyl-phosphate (acyl-PO(4)) from acyl-[acyl-carrier-protein] (acyl-ACP). This enzyme utilizes acyl-ACP as fatty acyl donor, but not acyl-CoA. The sequence is that of Phosphate acyltransferase from Rhodopseudomonas palustris (strain ATCC BAA-98 / CGA009).